Here is a 205-residue protein sequence, read N- to C-terminus: dITP/XTP pyrophosphatase (205 aa).

16-21 is a binding site for substrate; the sequence is TGNPGK. Glutamate 48 and aspartate 77 together coordinate Mg(2+). Residue aspartate 77 is the Proton acceptor of the active site. Substrate-binding positions include serine 78, 162 to 165, lysine 185, and 190 to 191; these read FGYD and HR.

This sequence belongs to the HAM1 NTPase family. Homodimer. Mg(2+) is required as a cofactor.

It catalyses the reaction XTP + H2O = XMP + diphosphate + H(+). It carries out the reaction dITP + H2O = dIMP + diphosphate + H(+). The enzyme catalyses ITP + H2O = IMP + diphosphate + H(+). Functionally, pyrophosphatase that catalyzes the hydrolysis of nucleoside triphosphates to their monophosphate derivatives, with a high preference for the non-canonical purine nucleotides XTP (xanthosine triphosphate), dITP (deoxyinosine triphosphate) and ITP. Seems to function as a house-cleaning enzyme that removes non-canonical purine nucleotides from the nucleotide pool, thus preventing their incorporation into DNA/RNA and avoiding chromosomal lesions. This is dITP/XTP pyrophosphatase from Erwinia tasmaniensis (strain DSM 17950 / CFBP 7177 / CIP 109463 / NCPPB 4357 / Et1/99).